A 96-amino-acid polypeptide reads, in one-letter code: Cytochrome b (96 aa).

A run of 3 helical transmembrane segments spans residues 1–15 (LCXI…FLAM), 39–60 (WLIR…YLHI), and 75–95 (WNVG…GYVL). Heme b is bound by residues His-45 and His-59.

Belongs to the cytochrome b family. In terms of assembly, the cytochrome bc1 complex contains 3 respiratory subunits (MT-CYB, CYC1 and UQCRFS1), 2 core proteins (UQCRC1 and UQCRC2) and probably 6 low-molecular weight proteins. The cofactor is heme b.

It localises to the mitochondrion inner membrane. Its function is as follows. Component of the ubiquinol-cytochrome c reductase complex (complex III or cytochrome b-c1 complex) that is part of the mitochondrial respiratory chain. The b-c1 complex mediates electron transfer from ubiquinol to cytochrome c. Contributes to the generation of a proton gradient across the mitochondrial membrane that is then used for ATP synthesis. This is Cytochrome b (mt-cyb) from Geophagus steindachneri (Red hump earth eater).